The sequence spans 382 residues: Mannitol-1-phosphate 5-dehydrogenase (382 aa).

4–15 (AVHFGAGNIGRG) contacts NAD(+).

Belongs to the mannitol dehydrogenase family.

The enzyme catalyses D-mannitol 1-phosphate + NAD(+) = beta-D-fructose 6-phosphate + NADH + H(+). The chain is Mannitol-1-phosphate 5-dehydrogenase from Vibrio campbellii (strain ATCC BAA-1116).